A 207-amino-acid chain; its full sequence is LexA repressor (207 aa).

The H-T-H motif DNA-binding region spans 28-48 (RAEIAQKLGFKSANAAEEHLK). Active-site for autocatalytic cleavage activity residues include S124 and K161.

This sequence belongs to the peptidase S24 family. As to quaternary structure, homodimer.

It carries out the reaction Hydrolysis of Ala-|-Gly bond in repressor LexA.. Represses a number of genes involved in the response to DNA damage (SOS response), including recA and lexA. In the presence of single-stranded DNA, RecA interacts with LexA causing an autocatalytic cleavage which disrupts the DNA-binding part of LexA, leading to derepression of the SOS regulon and eventually DNA repair. This chain is LexA repressor, found in Aeromonas hydrophila subsp. hydrophila (strain ATCC 7966 / DSM 30187 / BCRC 13018 / CCUG 14551 / JCM 1027 / KCTC 2358 / NCIMB 9240 / NCTC 8049).